The primary structure comprises 322 residues: Biotin synthase (322 aa).

A Radical SAM core domain is found at 39 to 266 (NQIQVSSLLN…KSVVRLSAGR (228 aa)). Residues C54, C58, and C61 each coordinate [4Fe-4S] cluster. 4 residues coordinate [2Fe-2S] cluster: C98, C129, C189, and R261.

This sequence belongs to the radical SAM superfamily. Biotin synthase family. Homodimer. [4Fe-4S] cluster serves as cofactor. [2Fe-2S] cluster is required as a cofactor.

It catalyses the reaction (4R,5S)-dethiobiotin + (sulfur carrier)-SH + 2 reduced [2Fe-2S]-[ferredoxin] + 2 S-adenosyl-L-methionine = (sulfur carrier)-H + biotin + 2 5'-deoxyadenosine + 2 L-methionine + 2 oxidized [2Fe-2S]-[ferredoxin]. It participates in cofactor biosynthesis; biotin biosynthesis; biotin from 7,8-diaminononanoate: step 2/2. Functionally, catalyzes the conversion of dethiobiotin (DTB) to biotin by the insertion of a sulfur atom into dethiobiotin via a radical-based mechanism. This is Biotin synthase from Ruthia magnifica subsp. Calyptogena magnifica.